Reading from the N-terminus, the 682-residue chain is MNSYQNKNEYEILDAKRNTCHMSNCYPKYPLANDPQMYLRNTHYKDWINMCEEASYASSGPSQLFKVGGSIVAKILGMIPEVGPLLSWMVSLFWPTIEEKNTVWEDMIKYVANLLKQELTNDTLNRATSNLSGLNESLNIYNRALAAWKQNKNNFASGELIRSYINDLHILFTRDIQSDFSLGGYETVLLPSYASAANLHLLLLRDVAIYGKELGYPSTDVEFYYNEQKYYTEKYSNYCVNTYKSGLESKKQIGWSDFNRYRREMTLSVLDIVALFPLYDTGLYPSKDGKIHVKAELTREIYSDVINDHVYGLMVPYISFEHAESLYTRRPHAFTWLKGFRFVTNSINSWTFLSGGENRYFLTHGEGTIYNGPFLGQDTEYGGTSSYIDISNNSSIYNLWTKNYEWIYPWTDPVNITKINFSITDNSNSSESIYGAERMNKPTVRTDFNFLLNRAGNGPTTYNDYNHILSYMLINGETFGQKRHGYSFAFTHSSVDRYNTIVPDKIVQIPAVKTNLVGANIIKGPGHTGGDLLKLEYERFLSLRIKLIASMTFRIRIRYASNISGQMMINIGYQNPTYFNIIPTTSRDYTELKFEDFQLVDTSYIYSGGPSISSNTLWLDNFSNGPVIIDKIEFIPLGITLNQAQGYDTYDQNANGMYHQNYSNSGYNYNQEYNTYYQSYNN.

The protein belongs to the delta endotoxin family.

In terms of biological role, promotes colloidosmotic lysis by binding to the midgut epithelial cells of mosquitos. Has larvicidal activity against Culex pipiens molestus, but not to Anopheles stephensi. The protein is Pesticidal crystal protein Cry19Ba of Bacillus thuringiensis subsp. higo.